The chain runs to 586 residues: Probable zinc metalloprotease EGY3, chloroplastic (586 aa).

A chloroplast-targeting transit peptide spans 1–54; it reads MSSSSLVTSLLFSSSSSSNTATSTSSRRSFSLFSKNQYCKPSPLRRSSSLLLVR. Residues 62–73 are compositionally biased toward basic and acidic residues; it reads EEKAAPAAESHH. A disordered region spans residues 62-118; it reads EEKAAPAAESHHAGGGQDDAATASHHAVEGENGVADADGGGVKKSKEELEEEEQQEV. Positions 103 to 195 form a coiled coil; the sequence is VKKSKEELEE…NTFKALDLNK (93 aa). A run of 7 helical transmembrane segments spans residues 287–307, 318–338, 389–409, 427–447, 454–474, 506–526, and 550–570; these read LSAV…SGFF, VSDV…SEIA, ASAY…DGSL, PLLS…GNVL, VGVP…VTSL, VALG…WGLF, and YAWG…NGGG.

It belongs to the peptidase M50B family.

Its subcellular location is the plastid. The protein localises to the chloroplast membrane. In terms of biological role, probable membrane-associated metalloprotease that may be involved in chloroplast development. This chain is Probable zinc metalloprotease EGY3, chloroplastic (EGY3), found in Oryza sativa subsp. indica (Rice).